Consider the following 223-residue polypeptide: 2-phospho-L-lactate guanylyltransferase (223 aa).

The protein belongs to the CofC family. As to quaternary structure, homodimer.

It catalyses the reaction (2S)-2-phospholactate + GTP + H(+) = (2S)-lactyl-2-diphospho-5'-guanosine + diphosphate. It functions in the pathway cofactor biosynthesis; coenzyme F420 biosynthesis. Guanylyltransferase that catalyzes the activation of (2S)-2-phospholactate (2-PL) as (2S)-lactyl-2-diphospho-5'-guanosine, via the condensation of 2-PL with GTP. It is involved in the biosynthesis of coenzyme F420, a hydride carrier cofactor. This chain is 2-phospho-L-lactate guanylyltransferase, found in Methanothermobacter thermautotrophicus (strain ATCC 29096 / DSM 1053 / JCM 10044 / NBRC 100330 / Delta H) (Methanobacterium thermoautotrophicum).